The following is an 826-amino-acid chain: Putative ankyrin repeat protein RBE_0220 (826 aa).

ANK repeat units lie at residues 308 to 337, 342 to 371, 375 to 404, 445 to 474, 478 to 507, 512 to 541, 545 to 574, and 578 to 607; these read LGTS…DQHA, IDMS…DPNY, DNDT…DPNK, NDFT…DVNA, DGFT…NPDV, TKSS…NPNL, DGTT…DINK, and NGDN…DLKK.

In Rickettsia bellii (strain RML369-C), this protein is Putative ankyrin repeat protein RBE_0220.